A 195-amino-acid polypeptide reads, in one-letter code: Peptidyl-tRNA hydrolase (195 aa).

Y17 serves as a coordination point for tRNA. H22 serves as the catalytic Proton acceptor. 3 residues coordinate tRNA: F68, N70, and N116.

This sequence belongs to the PTH family. Monomer.

The protein resides in the cytoplasm. It carries out the reaction an N-acyl-L-alpha-aminoacyl-tRNA + H2O = an N-acyl-L-amino acid + a tRNA + H(+). Hydrolyzes ribosome-free peptidyl-tRNAs (with 1 or more amino acids incorporated), which drop off the ribosome during protein synthesis, or as a result of ribosome stalling. Its function is as follows. Catalyzes the release of premature peptidyl moieties from peptidyl-tRNA molecules trapped in stalled 50S ribosomal subunits, and thus maintains levels of free tRNAs and 50S ribosomes. This is Peptidyl-tRNA hydrolase from Pectobacterium atrosepticum (strain SCRI 1043 / ATCC BAA-672) (Erwinia carotovora subsp. atroseptica).